A 369-amino-acid chain; its full sequence is Phospho-N-acetylmuramoyl-pentapeptide-transferase (369 aa).

The next 10 helical transmembrane spans lie at 30–50, 73–93, 99–119, 140–160, 171–191, 202–222, 239–259, 266–286, 291–311, and 346–366; these read AAAITSLLITILAGPKLIGYL, LPTMGGTLIIFSVVVSGLLWA, YVWLILLSILWMGTIGFIDDY, VSLGLFIGFYTRFDPAFSVLL, LMIDYGWWYIPVVVFIITAVS, GLAAGTSGIVVFGLGGFAYLT, GGEVAVVSMAIVMACVGFLWF, IFMGDTGSLALGSAIAVIALL, LLLPVLAGTFLLETLSVSLQV, and KIVIRFWIITLLFFLASLMTL.

This sequence belongs to the glycosyltransferase 4 family. MraY subfamily. Mg(2+) is required as a cofactor.

It localises to the cell inner membrane. It carries out the reaction UDP-N-acetyl-alpha-D-muramoyl-L-alanyl-gamma-D-glutamyl-meso-2,6-diaminopimeloyl-D-alanyl-D-alanine + di-trans,octa-cis-undecaprenyl phosphate = di-trans,octa-cis-undecaprenyl diphospho-N-acetyl-alpha-D-muramoyl-L-alanyl-D-glutamyl-meso-2,6-diaminopimeloyl-D-alanyl-D-alanine + UMP. It participates in cell wall biogenesis; peptidoglycan biosynthesis. In terms of biological role, catalyzes the initial step of the lipid cycle reactions in the biosynthesis of the cell wall peptidoglycan: transfers peptidoglycan precursor phospho-MurNAc-pentapeptide from UDP-MurNAc-pentapeptide onto the lipid carrier undecaprenyl phosphate, yielding undecaprenyl-pyrophosphoryl-MurNAc-pentapeptide, known as lipid I. This is Phospho-N-acetylmuramoyl-pentapeptide-transferase from Chlorobium phaeobacteroides (strain BS1).